Consider the following 245-residue polypeptide: Ribosomal RNA large subunit methyltransferase E (245 aa).

The segment at M1–K25 is disordered. Residues S11–K25 show a composition bias toward basic residues. G81, W83, D104, D120, and D144 together coordinate S-adenosyl-L-methionine. K184 acts as the Proton acceptor in catalysis.

This sequence belongs to the class I-like SAM-binding methyltransferase superfamily. RNA methyltransferase RlmE family.

It localises to the cytoplasm. It catalyses the reaction uridine(2552) in 23S rRNA + S-adenosyl-L-methionine = 2'-O-methyluridine(2552) in 23S rRNA + S-adenosyl-L-homocysteine + H(+). Functionally, specifically methylates the uridine in position 2552 of 23S rRNA at the 2'-O position of the ribose in the fully assembled 50S ribosomal subunit. The chain is Ribosomal RNA large subunit methyltransferase E from Sinorhizobium fredii (strain NBRC 101917 / NGR234).